We begin with the raw amino-acid sequence, 394 residues long: ATP phosphoribosyltransferase regulatory subunit (394 aa).

Belongs to the class-II aminoacyl-tRNA synthetase family. HisZ subfamily. Heteromultimer composed of HisG and HisZ subunits.

The protein resides in the cytoplasm. Its pathway is amino-acid biosynthesis; L-histidine biosynthesis; L-histidine from 5-phospho-alpha-D-ribose 1-diphosphate: step 1/9. Required for the first step of histidine biosynthesis. May allow the feedback regulation of ATP phosphoribosyltransferase activity by histidine. The protein is ATP phosphoribosyltransferase regulatory subunit of Pseudomonas aeruginosa (strain LESB58).